We begin with the raw amino-acid sequence, 338 residues long: Methionine import ATP-binding protein MetN 1 (338 aa).

The ABC transporter domain maps to 2–241 (IELHQVSKSF…AKHATTKRFV (240 aa)). 38 to 45 (GYSGAGKS) is an ATP binding site.

This sequence belongs to the ABC transporter superfamily. Methionine importer (TC 3.A.1.24) family. The complex is composed of two ATP-binding proteins (MetN), two transmembrane proteins (MetI) and a solute-binding protein (MetQ).

It is found in the cell membrane. The enzyme catalyses L-methionine(out) + ATP + H2O = L-methionine(in) + ADP + phosphate + H(+). The catalysed reaction is D-methionine(out) + ATP + H2O = D-methionine(in) + ADP + phosphate + H(+). In terms of biological role, part of the ABC transporter complex MetNIQ involved in methionine import. Responsible for energy coupling to the transport system. This is Methionine import ATP-binding protein MetN 1 from Listeria monocytogenes serotype 4b (strain F2365).